Consider the following 169-residue polypeptide: Putative glycine cleavage system H protein, mitochondrial (169 aa).

A Lipoyl-binding domain is found at 60 to 142 (VGTVGITSYA…EEEGWICKIK (83 aa)). The residue at position 101 (Lys101) is an N6-lipoyllysine. Ser131 is modified (phosphoserine).

The protein belongs to the GcvH family. Component of the glycine decarboxylase complex (GDC), which is composed of four proteins: P, T, L and H. The cofactor is (R)-lipoate.

It localises to the mitochondrion. Functionally, the glycine cleavage system (glycine decarboxylase complex) catalyzes the degradation of glycine. The H protein shuttles the methylamine group of glycine from the P protein to the T protein. The chain is Putative glycine cleavage system H protein, mitochondrial (gcv3) from Schizosaccharomyces pombe (strain 972 / ATCC 24843) (Fission yeast).